Reading from the N-terminus, the 100-residue chain is Urease subunit gamma 2 (100 aa).

It belongs to the urease gamma subunit family. In terms of assembly, heterotrimer of UreA (gamma), UreB (beta) and UreC (alpha) subunits. Three heterotrimers associate to form the active enzyme.

The protein localises to the cytoplasm. It catalyses the reaction urea + 2 H2O + H(+) = hydrogencarbonate + 2 NH4(+). It participates in nitrogen metabolism; urea degradation; CO(2) and NH(3) from urea (urease route): step 1/1. The protein is Urease subunit gamma 2 of Psychrobacter cryohalolentis (strain ATCC BAA-1226 / DSM 17306 / VKM B-2378 / K5).